The chain runs to 107 residues: Transcription initiation factor IIA subunit 2-2 (107 aa).

It belongs to the TFIIA subunit 2 family. In terms of assembly, TFIIA is a heterodimer of the large unprocessed subunit 1 and a small subunit gamma. It was originally believed to be a heterotrimer of an alpha (p30), a beta (p20) and a gamma (p14) subunit.

The protein localises to the nucleus. Functionally, TFIIA is a component of the transcription machinery of RNA polymerase II and plays an important role in transcriptional activation. TFIIA in a complex with TBP mediates transcriptional activity. This chain is Transcription initiation factor IIA subunit 2-2 (TfIIA-S-2), found in Drosophila melanogaster (Fruit fly).